A 122-amino-acid chain; its full sequence is uncharacterized protein (122 aa).

This is an uncharacterized protein from Human adenovirus F serotype 41 (HAdV-41).